A 162-amino-acid chain; its full sequence is MDFDNLLNLEEQYYQEGFLEGQNENIKQSFLEGKQYGLQVGFQRFTLLGQMEGLCDVIESYGLHSPTLEKNIHTIRTLMKGLKMNNDDESVMEFERVLIKLKNKFRTILITLHRLVKDKRTPTVTFEVFEDVSRAIAGEIRGFVENEDIAKNKTKQNQAQSW.

The segment at 17 to 53 is deca-GX3 motif; required for interaction with YAE1 and the CIA complex; that stretch reads GFLEGQNENIKQSFLEGKQYGLQVGFQRFTLLGQMEG.

It belongs to the LTO1 family. As to quaternary structure, forms a complex with YAE1; the complex bridges the interaction between the CIA complex and RLI1. Associates with the CIA complex (via its C-terminal tryptophan).

The protein resides in the nucleus. Functionally, essential for life in oxygen, but nonessential under anaerobic conditions. Required for biogenesis of the large ribosomal subunit and initiation of translation in oxygen. The complex LTO1:YAE1 functions as a target specific adapter that recruits apo-RLI1 to the cytosolic iron-sulfur protein assembly (CIA) complex machinery. The protein is Protein LTO1 of Saccharomyces cerevisiae (strain ATCC 204508 / S288c) (Baker's yeast).